Here is a 184-residue protein sequence, read N- to C-terminus: Endoribonuclease YbeY (184 aa).

3 residues coordinate Zn(2+): His146, His150, and His156.

This sequence belongs to the endoribonuclease YbeY family. Requires Zn(2+) as cofactor.

The protein resides in the cytoplasm. In terms of biological role, single strand-specific metallo-endoribonuclease involved in late-stage 70S ribosome quality control and in maturation of the 3' terminus of the 16S rRNA. In Nostoc sp. (strain PCC 7120 / SAG 25.82 / UTEX 2576), this protein is Endoribonuclease YbeY.